The sequence spans 554 residues: NADH-quinone oxidoreductase subunit N 3 (554 aa).

14 helical membrane-spanning segments follow: residues 35 to 55, 65 to 85, 105 to 125, 161 to 181, 187 to 207, 222 to 242, 275 to 295, 322 to 342, 345 to 365, 371 to 391, 398 to 418, 442 to 462, 476 to 496, and 525 to 545; these read LMPVLIIVVAAVLGILVEAFV, LFLTVVAVAGSFAAIVGLAAG, PTLFLQGTILLVAMVALFTFA, GFTTTEVFPLLLFSVAGLLVF, LLTLFIALEVFSLPLYLLCAV, YFLLGAFSSAFLLFGIALLYG, ALLLIGGAMILTGLLFKVGAV, VAAFGALLRLLYVALPGLAWD, PVMWAVAIVTMLGGAIVAITQ, LLAYSSIAHAGFILAGVIAAS, VLFYLLAYSFVTVGAFAVVTL, VAAVFAVFLLAFAGIPLTSGF, GAGALVVVGVLSSAVAAFFYI, and IAVGVAVTLVLGLAPQYFLDL.

This sequence belongs to the complex I subunit 2 family. As to quaternary structure, NDH-1 is composed of 14 different subunits. Subunits NuoA, H, J, K, L, M, N constitute the membrane sector of the complex.

The protein resides in the cell membrane. It carries out the reaction a quinone + NADH + 5 H(+)(in) = a quinol + NAD(+) + 4 H(+)(out). Its function is as follows. NDH-1 shuttles electrons from NADH, via FMN and iron-sulfur (Fe-S) centers, to quinones in the respiratory chain. The immediate electron acceptor for the enzyme in this species is believed to be a menaquinone. Couples the redox reaction to proton translocation (for every two electrons transferred, four hydrogen ions are translocated across the cytoplasmic membrane), and thus conserves the redox energy in a proton gradient. The sequence is that of NADH-quinone oxidoreductase subunit N 3 from Streptomyces griseus subsp. griseus (strain JCM 4626 / CBS 651.72 / NBRC 13350 / KCC S-0626 / ISP 5235).